A 651-amino-acid chain; its full sequence is Acetyl-coenzyme A synthetase (651 aa).

CoA contacts are provided by residues 189-192 (RGGK), Thr-311, and Asn-335. Residues 387–389 (GEP), 411–416 (DTWWQT), Asp-500, and Arg-515 contribute to the ATP site. Ser-523 contacts CoA. Arg-526 serves as a coordination point for ATP. Mg(2+) is bound by residues Val-537, His-539, and Val-542. Arg-584 is a binding site for CoA. Lys-609 carries the post-translational modification N6-acetyllysine.

It belongs to the ATP-dependent AMP-binding enzyme family. Requires Mg(2+) as cofactor. Acetylated. Deacetylation by the SIR2-homolog deacetylase activates the enzyme.

The catalysed reaction is acetate + ATP + CoA = acetyl-CoA + AMP + diphosphate. Its function is as follows. Catalyzes the conversion of acetate into acetyl-CoA (AcCoA), an essential intermediate at the junction of anabolic and catabolic pathways. AcsA undergoes a two-step reaction. In the first half reaction, AcsA combines acetate with ATP to form acetyl-adenylate (AcAMP) intermediate. In the second half reaction, it can then transfer the acetyl group from AcAMP to the sulfhydryl group of CoA, forming the product AcCoA. This chain is Acetyl-coenzyme A synthetase, found in Allorhizobium ampelinum (strain ATCC BAA-846 / DSM 112012 / S4) (Agrobacterium vitis (strain S4)).